The following is a 1837-amino-acid chain: Zinc finger SWIM domain-containing protein 8 (1837 aa).

Ser36, Ser48, and Ser53 each carry phosphoserine. A disordered region spans residues 45–65; it reads RKQSAGPNSPTGGGGGGGSGG. Positions 55–65 are enriched in gly residues; that stretch reads TGGGGGGGSGG. The SWIM-type zinc finger occupies 172–208; that stretch reads YNVAVMFDRCRVTSCSCTCGAGAKWCTHVVALCLFRI. Phosphoserine is present on Ser437. Disordered regions lie at residues 514-727, 803-823, and 1016-1232; these read SRPG…EEDD, NPPD…KVST, and SQTH…VPNQ. Composition is skewed to basic and acidic residues over residues 523–532 and 566–575; these read GLEESRDRPR and LSAEGGDKAL. Position 567 is a phosphoserine (Ser567). Positions 579-602 are enriched in gly residues; that stretch reads GPGGGKAKALGGAGSGSKGSAGGG. A compositionally biased stretch (polar residues) spans 1019-1040; it reads HKPQTLSSFYSSSRPTTASQRS. A compositionally biased stretch (gly residues) spans 1119 to 1130; it reads SRGGYNGRGWGS. Thr1139 carries the post-translational modification Phosphothreonine. Residues 1144–1159 are compositionally biased toward polar residues; it reads IDSSAPETTSDSSPTL. 3 positions are modified to phosphoserine: Ser1153, Ser1156, and Ser1160. Residues 1174 to 1209 show a composition bias toward low complexity; it reads GRGQDSDSISSSSSDSLGSSSSSGSRRASASGGARA. Basic and acidic residues predominate over residues 1210-1226; the sequence is KTVEVGRYKGRRPESHA. Residue Ser1267 is modified to Phosphoserine. 2 disordered regions span residues 1442–1464 and 1635–1656; these read SASG…GGPG and QPSP…SQPV. Positions 1447-1464 are enriched in gly residues; it reads RAGGEAGRGMPEGRGGPG. Phosphoserine is present on Ser1836.

It belongs to the ZSWIM8 family. In terms of assembly, component of the SCF-like E3 ubiquitin-protein ligase complex which contains CUL3, RBX1, ELOB, ELOC and ZSWIM8. As to quaternary structure, (Microbial infection) Interacts with Zika virus protein NS5; this interaction allows STAT2 binding and subsequent proteasomal degradation.

The protein resides in the cytoplasm. It is found in the cytosol. It participates in protein modification; protein ubiquitination. Substrate recognition component of a SCF-like E3 ubiquitin-protein ligase complex that promotes target-directed microRNA degradation (TDMD), a process that mediates degradation of microRNAs (miRNAs). The SCF-like E3 ubiquitin-protein ligase complex acts by catalyzing ubiquitination and subsequent degradation of AGO proteins (AGO1, AGO2, AGO3 and/or AGO4), thereby exposing miRNAs for degradation. Specifically recognizes and binds AGO proteins when they are engaged with a TDMD target. May also act as a regulator of axon guidance: specifically recognizes misfolded ROBO3 and promotes its ubiquitination and subsequent degradation. Plays an essential role for proper embryonic development of heart and lung. Controls protein quality of DAB1, a key signal molecule for brain development, thus protecting its signaling strength. Mechanistically, recognizes intrinsically disordered regions of DAB1 and eliminates misfolded DAB1 that cannot be properly phosphorylated. In terms of biological role, (Microbial infection) Participates in Zika virus inhibition of IFN signaling by acting as a scaffold protein to connect ZSWIM8/CUL3 ligase complex and STAT2, leading to STAT2 degradation. The chain is Zinc finger SWIM domain-containing protein 8 from Homo sapiens (Human).